The primary structure comprises 298 residues: ATP synthase gamma chain (298 aa).

Belongs to the ATPase gamma chain family. As to quaternary structure, F-type ATPases have 2 components, CF(1) - the catalytic core - and CF(0) - the membrane proton channel. CF(1) has five subunits: alpha(3), beta(3), gamma(1), delta(1), epsilon(1). CF(0) has three main subunits: a, b and c.

Its subcellular location is the cell inner membrane. Functionally, produces ATP from ADP in the presence of a proton gradient across the membrane. The gamma chain is believed to be important in regulating ATPase activity and the flow of protons through the CF(0) complex. The chain is ATP synthase gamma chain from Zymomonas mobilis subsp. mobilis (strain ATCC 31821 / ZM4 / CP4).